Here is a 497-residue protein sequence, read N- to C-terminus: Serine/threonine-protein kinase cst-1 (497 aa).

Residues 1-27 are disordered; it reads MPPSTDSSRRNSEEGSSDGFKLDSSAL. Residues 35 to 286 form the Protein kinase domain; that stretch reads FDIVGKLGEG…ALRLCEHTFI (252 aa). Residues 41–49 and Lys64 each bind ATP; that span reads LGEGSYGSV. The active-site Proton acceptor is the Asp154. The tract at residues 367 to 416 is disordered; the sequence is KSAYIPGSSKNGNSPRVQPPGHTASASDPSKNQPFAQDGTGPNFQLGTSE. Over residues 390–416 the composition is skewed to polar residues; sequence ASASDPSKNQPFAQDGTGPNFQLGTSE. In terms of domain architecture, SARAH spans 446–493; the sequence is FEFLRNITLDELIRRKESLDSEMEEEIRELQRRYKTKRQPILDVIEIK. Residues 450–486 are a coiled coil; it reads RNITLDELIRRKESLDSEMEEEIRELQRRYKTKRQPI.

It belongs to the protein kinase superfamily. STE Ser/Thr protein kinase family. STE20 subfamily. Interacts with rsf-1 (via SARAH domain); the interaction is required for the phosphorylation of cst-1. Requires Mg(2+) as cofactor. Post-translationally, proteolytically cleaved by caspase-3 during apoptosis which results in kinase activation. In terms of processing, phosphorylated. Widely expressed in epidermal cells.

The catalysed reaction is L-seryl-[protein] + ATP = O-phospho-L-seryl-[protein] + ADP + H(+). It catalyses the reaction L-threonyl-[protein] + ATP = O-phospho-L-threonyl-[protein] + ADP + H(+). Its function is as follows. Serine/threonine-protein kinase which extends lifespan and delays tissue aging, probably by activating daf-16. The polypeptide is Serine/threonine-protein kinase cst-1 (Caenorhabditis elegans).